Reading from the N-terminus, the 451-residue chain is UDP-N-acetylmuramate--L-alanine ligase (451 aa).

110 to 116 (GTHGKTT) lines the ATP pocket.

The protein belongs to the MurCDEF family.

The protein localises to the cytoplasm. The catalysed reaction is UDP-N-acetyl-alpha-D-muramate + L-alanine + ATP = UDP-N-acetyl-alpha-D-muramoyl-L-alanine + ADP + phosphate + H(+). It functions in the pathway cell wall biogenesis; peptidoglycan biosynthesis. Its function is as follows. Cell wall formation. This is UDP-N-acetylmuramate--L-alanine ligase from Francisella tularensis subsp. mediasiatica (strain FSC147).